The primary structure comprises 217 residues: Nuclear transcription factor Y subunit C-3 (217 aa).

Polar residues predominate over residues 1 to 28; sequence MDQQGQSSAMNYGSNPYQTNAMTTTPTG. 2 disordered regions span residues 1–29 and 198–217; these read MDQQ…PTGS and PYMG…DPDN.

It belongs to the NFYC/HAP5 subunit family. Heterotrimeric transcription factor composed of three components, NF-YA, NF-YB and NF-YC. NF-YB and NF-YC must interact and dimerize for NF-YA association and DNA binding. In terms of tissue distribution, ubiquitous.

The protein resides in the nucleus. In terms of biological role, stimulates the transcription of various genes by recognizing and binding to a CCAAT motif in promoters. In Arabidopsis thaliana (Mouse-ear cress), this protein is Nuclear transcription factor Y subunit C-3 (NFYC3).